We begin with the raw amino-acid sequence, 123 residues long: ATP synthase epsilon chain (123 aa).

It belongs to the ATPase epsilon chain family. In terms of assembly, F-type ATPases have 2 components, CF(1) - the catalytic core - and CF(0) - the membrane proton channel. CF(1) has five subunits: alpha(3), beta(3), gamma(1), delta(1), epsilon(1). CF(0) has three main subunits: a, b and c.

It localises to the cell inner membrane. Functionally, produces ATP from ADP in the presence of a proton gradient across the membrane. The protein is ATP synthase epsilon chain (atpC) of Helicobacter pylori (strain ATCC 700392 / 26695) (Campylobacter pylori).